The following is a 690-amino-acid chain: Protein MODIFIED TRANSPORT TO THE VACUOLE 1 (690 aa).

One can recognise a VHS domain in the interval 20 to 150; the sequence is VTSDEDKVAP…PESINRRIEG (131 aa). Disordered stretches follow at residues 228-258 and 518-551; these read DGNY…SVRV and FSID…HQAP. A compositionally biased stretch (low complexity) spans 243–257; sequence GHASGEASESSASVR. The segment covering 520–536 has biased composition (polar residues); that stretch reads IDENNSNQKGSSSSTLP.

In terms of assembly, binds to clathrin heavy chain. Expressed in inflorescence stems, stigmas, roots, roots meristems, embryos, and floral and leaf vasculatures, but absent from the floral abscission zone.

The protein resides in the golgi apparatus. Its subcellular location is the trans-Golgi network. It localises to the cytoplasmic vesicle. The protein localises to the clathrin-coated vesicle. Its function is as follows. Mediates clathrin-dependent trafficking of vacuolar cargo from the trans-Golgi network (TGN). Promotes plant growth. The polypeptide is Protein MODIFIED TRANSPORT TO THE VACUOLE 1 (Arabidopsis thaliana (Mouse-ear cress)).